The following is a 4083-amino-acid chain: Dynein heavy chain, cytoplasmic (4083 aa).

The stem stretch occupies residues 1–1745 (MTDDQVAQAL…TIEQSCVSFC (1745 aa)). 3 coiled-coil regions span residues 127 to 166 (DAVVSTNSNLEAKQESINSARRKIKDLSLSLQSLQQFIEV), 381 to 402 (INQWEALLKEFTSLIRELMRKR), and 801 to 821 (KLDLQNLEVLINKIQLLVDQA). AAA stretches follow at residues 1746–1967 (YGFE…VLRN), 2026–2265 (SYLA…YKAD), 2373–2622 (SLES…WVRG), and 2716–2980 (TFAE…GNSQ). ATP-binding positions include 1784–1791 (GPAGTGKT), 2064–2071 (GDAGTGKT), 2412–2419 (GPPGSGKT), and 2754–2761 (GPNYSGKT). The stalk stretch occupies residues 2987-3294 (LTSLRRFQSL…RSIKLMESLT (308 aa)). 3 coiled-coil regions span residues 3015–3085 (LEKL…NERR), 3223–3302 (LKEE…RWIK), and 3527–3607 (LEKE…VEDL). AAA stretches follow at residues 3364–3592 (MVNP…EIAK) and 3748–3952 (LKSL…FLDH).

Belongs to the dynein heavy chain family. In terms of assembly, consists of at least two heavy chains and a number of intermediate and light chains.

Its subcellular location is the cytoplasm. The protein resides in the cytoskeleton. Functionally, cytoplasmic dynein acts as a motor for the intracellular retrograde motility of vesicles and organelles along microtubules. Dynein has ATPase activity; the force-producing power stroke is thought to occur on release of ADP. Required to maintain uniform nuclear distribution in hyphae. May play an important role in the proper orientation of the mitotic spindle into the budding daughter cell yeast. Probably required for normal progression of the cell cycle. This chain is Dynein heavy chain, cytoplasmic (DYN1), found in Eremothecium gossypii (strain ATCC 10895 / CBS 109.51 / FGSC 9923 / NRRL Y-1056) (Yeast).